A 471-amino-acid polypeptide reads, in one-letter code: PTS system mannitol-specific EIICB component (471 aa).

Topologically, residues 1 to 29 are cytoplasmic; sequence MTHTSENQAGFRVKIQRFGSYLSGMIMPN. A PTS EIIC type-2 domain is found at 18-342; it reads FGSYLSGMIM…FFVASIFLKS (325 aa). The chain crosses the membrane as a helical span at residues 30–51; the sequence is IGAFIAWGIITALFIPTGWLPN. Topologically, residues 52 to 55 are extracellular; the sequence is ETFA. The chain crosses the membrane as a helical span at residues 56–76; it reads KLVGPMITYLLPLLIGYTGGK. At 77–139 the chain is on the cytoplasmic side; sequence MIYDVRGGVV…QGFEMLVNNF (63 aa). A helical membrane pass occupies residues 140–161; that stretch reads SAGIIGGLLTLAAFKGVGPVVS. Residues 162 to 170 are Extracellular-facing; the sequence is AISKTLAAG. Residues 171-191 traverse the membrane as a helical segment; sequence VEKIVDLHLLPLANIFIEPGK. Residues 192–278 lie on the Cytoplasmic side of the membrane; the sequence is VLFLNNAINH…VLMRPILILA (87 aa). The chain crosses the membrane as a helical span at residues 279–298; the sequence is AIAGGVSGVLTFTIFDAGLV. Residues 299–318 lie on the Extracellular side of the membrane; sequence AVPSPGSIFALLAMTPKGNY. A helical transmembrane segment spans residues 319–340; sequence LGVLAGVLVATAVSFFVASIFL. Over 341-471 the chain is Cytoplasmic; it reads KSAKNNEEDI…YDELIEMLKK (131 aa). The 89-residue stretch at 383–471 folds into the PTS EIIB type-2 domain; it reads KKIVFACDAG…YDELIEMLKK (89 aa). Cys389 (phosphocysteine intermediate; for EIIB activity) is an active-site residue. A Phosphocysteine; by EIIA modification is found at Cys389.

In terms of assembly, homodimer.

The protein resides in the cell membrane. It catalyses the reaction D-mannitol(out) + N(pros)-phospho-L-histidyl-[protein] = D-mannitol 1-phosphate(in) + L-histidyl-[protein]. In terms of biological role, the phosphoenolpyruvate-dependent sugar phosphotransferase system (sugar PTS), a major carbohydrate active transport system, catalyzes the phosphorylation of incoming sugar substrates concomitantly with their translocation across the cell membrane. The enzyme II CmtAB PTS system is involved in D-mannitol transport. The protein is PTS system mannitol-specific EIICB component of Geobacillus stearothermophilus (Bacillus stearothermophilus).